Reading from the N-terminus, the 467-residue chain is Adenosylhomocysteinase (467 aa).

Thr68, Asp144, and Glu169 together coordinate substrate. 170–172 (TTT) contacts NAD(+). Positions 199 and 203 each coordinate substrate. Residues Asn204, 233-238 (GYGDVG), Glu256, Asn305, 326-328 (IGH), and Asn373 each bind NAD(+).

It belongs to the adenosylhomocysteinase family. NAD(+) serves as cofactor.

It is found in the cytoplasm. The enzyme catalyses S-adenosyl-L-homocysteine + H2O = L-homocysteine + adenosine. The protein operates within amino-acid biosynthesis; L-homocysteine biosynthesis; L-homocysteine from S-adenosyl-L-homocysteine: step 1/1. In terms of biological role, may play a key role in the regulation of the intracellular concentration of adenosylhomocysteine. This chain is Adenosylhomocysteinase, found in Acinetobacter baylyi (strain ATCC 33305 / BD413 / ADP1).